The primary structure comprises 513 residues: ATP synthase subunit alpha (513 aa).

An ATP-binding site is contributed by 169 to 176 (GDRQTGKT).

This sequence belongs to the ATPase alpha/beta chains family. In terms of assembly, F-type ATPases have 2 components, CF(1) - the catalytic core - and CF(0) - the membrane proton channel. CF(1) has five subunits: alpha(3), beta(3), gamma(1), delta(1), epsilon(1). CF(0) has three main subunits: a(1), b(2) and c(9-12). The alpha and beta chains form an alternating ring which encloses part of the gamma chain. CF(1) is attached to CF(0) by a central stalk formed by the gamma and epsilon chains, while a peripheral stalk is formed by the delta and b chains.

The protein resides in the cell inner membrane. The catalysed reaction is ATP + H2O + 4 H(+)(in) = ADP + phosphate + 5 H(+)(out). In terms of biological role, produces ATP from ADP in the presence of a proton gradient across the membrane. The alpha chain is a regulatory subunit. This Cupriavidus metallidurans (strain ATCC 43123 / DSM 2839 / NBRC 102507 / CH34) (Ralstonia metallidurans) protein is ATP synthase subunit alpha.